Consider the following 85-residue polypeptide: UPF0386 protein VF_0869 (85 aa).

It belongs to the UPF0386 family.

The chain is UPF0386 protein VF_0869 from Aliivibrio fischeri (strain ATCC 700601 / ES114) (Vibrio fischeri).